Here is a 273-residue protein sequence, read N- to C-terminus: Lactose transport system permease protein LacG (273 aa).

Helical transmembrane passes span 15-35 (YSVL…MVIG), 77-97 (IALV…YGFE), 110-130 (VILL…FMLM), 134-154 (GLLN…FIIF), 182-204 (FFYI…VFML), and 240-260 (GTVM…FFAM). The region spanning 71-260 (FWNSVKIALV…LPTLLVFFAM (190 aa)) is the ABC transmembrane type-1 domain.

This sequence belongs to the binding-protein-dependent transport system permease family. MalFG subfamily.

It localises to the cell inner membrane. In terms of biological role, part of the binding-protein-dependent transport system for lactose. Probably responsible for the translocation of the substrate across the membrane. This chain is Lactose transport system permease protein LacG (lacG), found in Rhizobium radiobacter (Agrobacterium tumefaciens).